The sequence spans 277 residues: 3-methyl-2-oxobutanoate hydroxymethyltransferase (277 aa).

Asp-43 and Asp-82 together coordinate Mg(2+). 3-methyl-2-oxobutanoate contacts are provided by residues 43 to 44, Asp-82, and Lys-112; that span reads DS. Glu-114 provides a ligand contact to Mg(2+). Residue Glu-181 is the Proton acceptor of the active site.

It belongs to the PanB family. In terms of assembly, homodecamer; pentamer of dimers. Mg(2+) is required as a cofactor.

Its subcellular location is the cytoplasm. The catalysed reaction is 3-methyl-2-oxobutanoate + (6R)-5,10-methylene-5,6,7,8-tetrahydrofolate + H2O = 2-dehydropantoate + (6S)-5,6,7,8-tetrahydrofolate. It participates in cofactor biosynthesis; (R)-pantothenate biosynthesis; (R)-pantoate from 3-methyl-2-oxobutanoate: step 1/2. In terms of biological role, catalyzes the reversible reaction in which hydroxymethyl group from 5,10-methylenetetrahydrofolate is transferred onto alpha-ketoisovalerate to form ketopantoate. This Exiguobacterium sp. (strain ATCC BAA-1283 / AT1b) protein is 3-methyl-2-oxobutanoate hydroxymethyltransferase.